Consider the following 186-residue polypeptide: Elongation factor P (186 aa).

The protein belongs to the elongation factor P family.

The protein resides in the cytoplasm. It participates in protein biosynthesis; polypeptide chain elongation. Its function is as follows. Involved in peptide bond synthesis. Stimulates efficient translation and peptide-bond synthesis on native or reconstituted 70S ribosomes in vitro. Probably functions indirectly by altering the affinity of the ribosome for aminoacyl-tRNA, thus increasing their reactivity as acceptors for peptidyl transferase. In Shewanella piezotolerans (strain WP3 / JCM 13877), this protein is Elongation factor P.